The primary structure comprises 454 residues: Bifunctional protein GlmU (454 aa).

A pyrophosphorylase region spans residues 1–226 (MALNVVILAA…AVEVEGANNR (226 aa)). UDP-N-acetyl-alpha-D-glucosamine contacts are provided by residues 8-11 (LAAG), Lys-22, Gln-73, 78-79 (GT), 100-102 (YGD), Gly-137, Glu-151, Asn-166, and Asn-224. Asp-102 contributes to the Mg(2+) binding site. Mg(2+) is bound at residue Asn-224. Residues 227-247 (VQLAQLERAYQARAAEKLMLE) are linker. The N-acetyltransferase stretch occupies residues 248 to 454 (GANLRDPARI…GWPRPVKLKK (207 aa)). UDP-N-acetyl-alpha-D-glucosamine contacts are provided by Arg-330 and Lys-348. His-360 (proton acceptor) is an active-site residue. UDP-N-acetyl-alpha-D-glucosamine contacts are provided by Tyr-363 and Asn-374. Acetyl-CoA contacts are provided by residues Ala-377, 383 to 384 (NY), Ser-402, Ala-420, and Arg-437.

It in the N-terminal section; belongs to the N-acetylglucosamine-1-phosphate uridyltransferase family. The protein in the C-terminal section; belongs to the transferase hexapeptide repeat family. As to quaternary structure, homotrimer. Mg(2+) is required as a cofactor.

The protein resides in the cytoplasm. It catalyses the reaction alpha-D-glucosamine 1-phosphate + acetyl-CoA = N-acetyl-alpha-D-glucosamine 1-phosphate + CoA + H(+). The enzyme catalyses N-acetyl-alpha-D-glucosamine 1-phosphate + UTP + H(+) = UDP-N-acetyl-alpha-D-glucosamine + diphosphate. It participates in nucleotide-sugar biosynthesis; UDP-N-acetyl-alpha-D-glucosamine biosynthesis; N-acetyl-alpha-D-glucosamine 1-phosphate from alpha-D-glucosamine 6-phosphate (route II): step 2/2. It functions in the pathway nucleotide-sugar biosynthesis; UDP-N-acetyl-alpha-D-glucosamine biosynthesis; UDP-N-acetyl-alpha-D-glucosamine from N-acetyl-alpha-D-glucosamine 1-phosphate: step 1/1. The protein operates within bacterial outer membrane biogenesis; LPS lipid A biosynthesis. Functionally, catalyzes the last two sequential reactions in the de novo biosynthetic pathway for UDP-N-acetylglucosamine (UDP-GlcNAc). The C-terminal domain catalyzes the transfer of acetyl group from acetyl coenzyme A to glucosamine-1-phosphate (GlcN-1-P) to produce N-acetylglucosamine-1-phosphate (GlcNAc-1-P), which is converted into UDP-GlcNAc by the transfer of uridine 5-monophosphate (from uridine 5-triphosphate), a reaction catalyzed by the N-terminal domain. The protein is Bifunctional protein GlmU of Shewanella pealeana (strain ATCC 700345 / ANG-SQ1).